Here is a 273-residue protein sequence, read N- to C-terminus: 2,3,4,5-tetrahydropyridine-2,6-dicarboxylate N-succinyltransferase (273 aa).

Substrate is bound by residues Arg-104 and Asp-141.

The protein belongs to the transferase hexapeptide repeat family. In terms of assembly, homotrimer.

The protein localises to the cytoplasm. The catalysed reaction is (S)-2,3,4,5-tetrahydrodipicolinate + succinyl-CoA + H2O = (S)-2-succinylamino-6-oxoheptanedioate + CoA. It participates in amino-acid biosynthesis; L-lysine biosynthesis via DAP pathway; LL-2,6-diaminopimelate from (S)-tetrahydrodipicolinate (succinylase route): step 1/3. This Nitrosospira multiformis (strain ATCC 25196 / NCIMB 11849 / C 71) protein is 2,3,4,5-tetrahydropyridine-2,6-dicarboxylate N-succinyltransferase.